A 475-amino-acid polypeptide reads, in one-letter code: Ammonium transporter Rh type C (475 aa).

At 1-20 (MGCVQSFRNFCDRPKNTNVR) the chain is on the cytoplasmic side. Residues 21-41 (ISLPAVCFVWQIAMIILFGVF) form a helical membrane-spanning segment. Residues 42-73 (IRYNEEADTHWVEYRKKENISSDIENDFYFRY) are Extracellular-facing. N-linked (GlcNAc...) asparagine glycosylation occurs at asparagine 60. The helical transmembrane segment at 74–94 (PSFQDVHVMIFVGFGFLMTFL) threads the bilayer. At 95-98 (KRYS) the chain is on the cytoplasmic side. A helical membrane pass occupies residues 99 to 119 (FGAVGFNFLIAAFGLQWALLM). Residues 120 to 138 (QGWFHSLDYTDGKIKIGIE) are Extracellular-facing. A helical transmembrane segment spans residues 139 to 159 (NLINADFCVAGCLIAYGAVLG). Over 160–167 (KVSPVQLM) the chain is Cytoplasmic. The helical transmembrane segment at 168-188 (VLTLFGITLFAVEEYIILNLI) threads the bilayer. The Extracellular portion of the chain corresponds to 189 to 193 (HARDA). Residues 194–214 (GGSMVIHTFGGYYGLSISWML) form a helical membrane-spanning segment. The Cytoplasmic segment spans residues 215–233 (YRPNLEQSSNLQGSVYQSD). Residues 234-254 (VFAMIGTLFLWMFWPSFNSAI) form a helical membrane-spanning segment. The Extracellular segment spans residues 255–265 (TDHGDGQHRAA). A helical transmembrane segment spans residues 266-286 (INTYLALASTVLTTVAISSLF). Residues 287–299 (QKHGKLDMVHIQN) are Cytoplasmic-facing. Residues 300–320 (STLAGGVAVGTAAEFMLMPYG) traverse the membrane as a helical segment. Residue serine 321 is a topological domain, extracellular. Residues 322–342 (LIVGFCCGIISTLGYIYLTPF) traverse the membrane as a helical segment. Residues 343–357 (MEKYLKIQDTCGIHN) are Cytoplasmic-facing. Residues 358 to 378 (LHAMPGLIGGIVGAITAAAAT) form a helical membrane-spanning segment. Residues 379 to 410 (ESVYGKEGLVNTFDFVGPFKNMVPTTQGGHQA) are Extracellular-facing. Residues 411-431 (AGLCVAICFGIGGGIMVGCIL) form a helical membrane-spanning segment. Over 432–475 (RLPIWCDPADDNCFNDEPYWELPEEEEIIPPILHYNNHMVNKDV) the chain is Cytoplasmic.

The protein belongs to the ammonium transporter (TC 2.A.49) family. Rh subfamily. As to quaternary structure, homotrimer.

The protein localises to the apical cell membrane. Functionally, functions as an ammonia transporter. May play a role in the elimination of ammonia in the gill. In Tetraodon nigroviridis (Spotted green pufferfish), this protein is Ammonium transporter Rh type C (rhcg).